Reading from the N-terminus, the 114-residue chain is Putative antiporter subunit mnhC2 (114 aa).

Transmembrane regions (helical) follow at residues 3–23, 25–45, and 72–92; these read LILLLVIGFLVFIGTYMILSI, LIRIVIGISIYTHAGNLIIMS, and AIVLTAIVIGFGMTAFLLVLI.

It belongs to the CPA3 antiporters (TC 2.A.63) subunit C family. In terms of assembly, may form a heterooligomeric complex that consists of seven subunits: mnhA2, mnhB2, mnhC2, mnhD2, mnhE2, mnhF2 and mnhG2.

The protein localises to the cell membrane. The chain is Putative antiporter subunit mnhC2 (mnhC2) from Staphylococcus epidermidis (strain ATCC 12228 / FDA PCI 1200).